The sequence spans 231 residues: E3 ubiquitin-protein ligase At3g02290 (231 aa).

A compositionally biased stretch (basic and acidic residues) spans G103–S118. The disordered stretch occupies residues G103 to F125. The RING-type; atypical zinc finger occupies C181 to G222.

The protein localises to the cytoplasm. It carries out the reaction S-ubiquitinyl-[E2 ubiquitin-conjugating enzyme]-L-cysteine + [acceptor protein]-L-lysine = [E2 ubiquitin-conjugating enzyme]-L-cysteine + N(6)-ubiquitinyl-[acceptor protein]-L-lysine.. It functions in the pathway protein modification; protein ubiquitination. Its function is as follows. Mediates E2-dependent protein ubiquitination. The chain is E3 ubiquitin-protein ligase At3g02290 from Arabidopsis thaliana (Mouse-ear cress).